A 455-amino-acid chain; its full sequence is MSFIPHKLEQIKKMLDTIGASSVDQLFDEIPRHLRADTLKIKDGINEIQLANLMRKRANKNHHNINYIGAGAYSHHIPAAIWDIVARGEFYTAYTPYQAEASQGGLQVIYEFQTMMAGLTGMDASNASMYDGATALAESVLMAIRSNKKAKSQKVLIAEALHPTYLRVLETITKHQGIEFDIVNLDSKNGKTDVTKLEDFANTNYAAVVIQSPNFLGQLADVDGITNWAHKHGALVVAVTNPMSLAILKSPAEWGDNGADIVCGEGQPMGVPLASGGPYFGFMTCKMAHVRQMPGRIVGRTVDLDGNEGFCLTLQAREQHIRRAKATSNICTNQGLMVTAATIYMSLLGAEGLERVASISHENTQTLATELAKINGVSIRFNSAFFNEVVIDLPVNAETFVTEMEKEAIDAGYFLGEYHSDLANSIMVCATEIHTSEDIKEYIEATKKVLARIGG.

It belongs to the GcvP family. N-terminal subunit subfamily. As to quaternary structure, the glycine cleavage system is composed of four proteins: P, T, L and H. In this organism, the P 'protein' is a heterodimer of two subunits.

The catalysed reaction is N(6)-[(R)-lipoyl]-L-lysyl-[glycine-cleavage complex H protein] + glycine + H(+) = N(6)-[(R)-S(8)-aminomethyldihydrolipoyl]-L-lysyl-[glycine-cleavage complex H protein] + CO2. Functionally, the glycine cleavage system catalyzes the degradation of glycine. The P protein binds the alpha-amino group of glycine through its pyridoxal phosphate cofactor; CO(2) is released and the remaining methylamine moiety is then transferred to the lipoamide cofactor of the H protein. In Francisella tularensis subsp. mediasiatica (strain FSC147), this protein is Probable glycine dehydrogenase (decarboxylating) subunit 1.